A 957-amino-acid polypeptide reads, in one-letter code: Dystrophin-related protein 2 (957 aa).

Spectrin repeat units follow at residues 102–179 and 231–337; these read DHSG…EELE and EQLL…QLQD. The WW domain occupies 358 to 383; it reads WERAISPNKVPYYINHQAQTTCWDHP. Residues 605–661 form a ZZ-type; degenerate zinc finger; it reads KHQTKCSICRQCPIKGFRYRSLKQFNVDICQTCFLTGRASKGNKLHYPIMEYYTPTT. Cysteine 610, cysteine 613, cysteine 634, and cysteine 637 together coordinate Zn(2+). The residue at position 748 (serine 748) is a Phosphoserine. Residues 877–900 show a composition bias toward low complexity; that stretch reads PPTESDGSGSAGSSLASSPQQSEG. The interval 877-923 is disordered; the sequence is PPTESDGSGSAGSSLASSPQQSEGSHPREKGQTTPDTEAADDVGSKS. Position 910 is a phosphothreonine (threonine 910).

As to quaternary structure, interacts with PRX; this enhances phosphorylation. Identified in a dystroglycan complex that contains at least PRX, DRP2, UTRN, DMD and DAG1. As to expression, detected in fetal brain.

The protein resides in the postsynaptic density. Its subcellular location is the cell projection. It localises to the dendrite. The protein localises to the perikaryon. It is found in the cell membrane. Functionally, required for normal myelination and for normal organization of the cytoplasm and the formation of Cajal bands in myelinating Schwann cells. Required for normal PRX location at appositions between the abaxonal surface of the myelin sheath and the Schwann cell plasma membrane. Possibly involved in membrane-cytoskeleton interactions of the central nervous system. This is Dystrophin-related protein 2 (DRP2) from Homo sapiens (Human).